The primary structure comprises 90 residues: Aminoacyl carrier protein 1 (90 aa).

The region spanning 6–84 (TDVRNRIIKL…TLERMVMTQL (79 aa)) is the Carrier domain. Position 42 is an O-(pantetheine 4'-phosphoryl)serine (serine 42).

4'-phosphopantetheine is transferred from CoA to a specific serine of the apo-form of this carrier protein.

Its function is as follows. Aminoacyl carrier protein. Can be charged with L-glycine via the formation of a thioester bond between the amino acid and the 4'-phosphopantetheinyl prosthetic group, catalyzed by the bll0957 ligase. This is Aminoacyl carrier protein 1 from Bradyrhizobium diazoefficiens (strain JCM 10833 / BCRC 13528 / IAM 13628 / NBRC 14792 / USDA 110).